A 565-amino-acid chain; its full sequence is MDSSPVTYSGEPPYKLRRLSPSYPYVSKLRERCASKIETLSEGSARDSLEEEDVSEAMATGAFLATRLYLPSVLPQRITTLTFLDHFKKSRPLPNSDKRLNPIFYRLAYIRDLVGEMELEGIVERGTASRLLGASSPAGFVAGTYTHARDLSKTMSLASVRDAVLAIEAQTRDQSESQLWALLRRGLATASTMKWGALGPQYHPQWCEVSTNAKGIPNNPALQFGQTNERTARSLISALYVARSEAATPDLLVDPGCGQCFVFDESASVPGDAYACGLLMDARTGVVGASLDMLVCDRDPSGVLSPHSTQTTLDFFEIKCRAKYLFDPDLFSPVATAYANLLKHRTAVCLRKFLRSIKNPAVEYFAPTSVPGATEALITCNSSWKPREVNETNRRCGDFDRDHIALNLDASSDVWLFSEPDLESETITPARWDTGELALSVPVFANPRHPNFKQILVQAYVLSGHFPDHQLRPFLVTFIGRHRKRCEEGKTFTICDRPEGSPYNLNEVVHSSCAIPILLFVTPVIVDREGCWEDIEIESLTAFNKTADAIWDSDSPADVSEPTSS.

Belongs to the herpesviridae alkaline nuclease family. Interacts with major DNA-binding protein; this interaction increases the nuclease processivity of the alkaline exonuclease.

Its subcellular location is the host nucleus. It localises to the host cytoplasm. Plays a role in processing non linear or branched viral DNA intermediates in order to promote the production of mature packaged unit-length linear progeny viral DNA molecules. Exhibits endonuclease and exonuclease activities and accepts both double-stranded and single-stranded DNA as substrate. Exonuclease digestion of DNA is in the 5'-&gt; 3' direction and the products are 5'-monophosphate nucleosides. Additionally, forms a recombinase with the major DNA-binding protein, which displays strand exchange activity. In Equus caballus (Horse), this protein is Alkaline nuclease.